The sequence spans 232 residues: Thiamine import ATP-binding protein ThiQ (232 aa).

The ABC transporter domain occupies 2–230 (LKLTDITWLY…KASASALLGI (229 aa)). An ATP-binding site is contributed by 32–39 (GPSGAGKS).

The protein belongs to the ABC transporter superfamily. Thiamine importer (TC 3.A.1.19.1) family. In terms of assembly, the complex is composed of two ATP-binding proteins (ThiQ), two transmembrane proteins (ThiP) and a solute-binding protein (ThiB).

Its subcellular location is the cell inner membrane. It carries out the reaction thiamine(out) + ATP + H2O = thiamine(in) + ADP + phosphate + H(+). Its function is as follows. Part of the ABC transporter complex ThiBPQ involved in thiamine import. Responsible for energy coupling to the transport system. This is Thiamine import ATP-binding protein ThiQ from Escherichia coli O6:H1 (strain CFT073 / ATCC 700928 / UPEC).